The sequence spans 91 residues: Small integral membrane protein 12-B (91 aa).

A helical transmembrane segment spans residues 12-34 (YAPYITFPVAFVVGAVGYQLEWF).

The protein belongs to the SMIM12 family.

It localises to the membrane. This is Small integral membrane protein 12-B (smim12-b) from Xenopus laevis (African clawed frog).